A 275-amino-acid chain; its full sequence is NH(3)-dependent NAD(+) synthetase (275 aa).

46-53 (GISGGQDS) serves as a coordination point for ATP. Residue Asp-52 coordinates Mg(2+). Arg-140 is a binding site for deamido-NAD(+). Thr-160 lines the ATP pocket. Mg(2+) is bound at residue Glu-165. Deamido-NAD(+) is bound by residues Lys-173 and Asp-180. ATP is bound by residues Lys-189 and Thr-211. 260–261 (HK) is a deamido-NAD(+) binding site.

The protein belongs to the NAD synthetase family. As to quaternary structure, homodimer.

The catalysed reaction is deamido-NAD(+) + NH4(+) + ATP = AMP + diphosphate + NAD(+) + H(+). It participates in cofactor biosynthesis; NAD(+) biosynthesis; NAD(+) from deamido-NAD(+) (ammonia route): step 1/1. Catalyzes the ATP-dependent amidation of deamido-NAD to form NAD. Uses ammonia as a nitrogen source. The sequence is that of NH(3)-dependent NAD(+) synthetase from Salmonella agona (strain SL483).